A 391-amino-acid chain; its full sequence is Lipid-A-disaccharide synthase (391 aa).

Belongs to the LpxB family.

The catalysed reaction is a lipid X + a UDP-2-N,3-O-bis[(3R)-3-hydroxyacyl]-alpha-D-glucosamine = a lipid A disaccharide + UDP + H(+). It participates in bacterial outer membrane biogenesis; LPS lipid A biosynthesis. Condensation of UDP-2,3-diacylglucosamine and 2,3-diacylglucosamine-1-phosphate to form lipid A disaccharide, a precursor of lipid A, a phosphorylated glycolipid that anchors the lipopolysaccharide to the outer membrane of the cell. This is Lipid-A-disaccharide synthase from Aromatoleum aromaticum (strain DSM 19018 / LMG 30748 / EbN1) (Azoarcus sp. (strain EbN1)).